Reading from the N-terminus, the 85-residue chain is RNA-binding protein Hfq (85 aa).

The region spanning 11–71 (DTFLNHVRKS…ISTIMPGHPV (61 aa)) is the Sm domain.

It belongs to the Hfq family. In terms of assembly, homohexamer.

Its function is as follows. RNA chaperone that binds small regulatory RNA (sRNAs) and mRNAs to facilitate mRNA translational regulation in response to envelope stress, environmental stress and changes in metabolite concentrations. Also binds with high specificity to tRNAs. Seems to be involved in the regulation of NifA. The protein is RNA-binding protein Hfq of Azorhizobium caulinodans (strain ATCC 43989 / DSM 5975 / JCM 20966 / LMG 6465 / NBRC 14845 / NCIMB 13405 / ORS 571).